A 401-amino-acid polypeptide reads, in one-letter code: Glutamyl-tRNA reductase (401 aa).

Substrate-binding positions include 45 to 48, Ser101, 106 to 108, and Gln112; these read TCNR and EDQ. Cys46 serves as the catalytic Nucleophile. 177-182 contacts NADP(+); that stretch reads GYGEVG.

Belongs to the glutamyl-tRNA reductase family. In terms of assembly, homodimer.

The catalysed reaction is (S)-4-amino-5-oxopentanoate + tRNA(Glu) + NADP(+) = L-glutamyl-tRNA(Glu) + NADPH + H(+). It functions in the pathway porphyrin-containing compound metabolism; protoporphyrin-IX biosynthesis; 5-aminolevulinate from L-glutamyl-tRNA(Glu): step 1/2. Its function is as follows. Catalyzes the NADPH-dependent reduction of glutamyl-tRNA(Glu) to glutamate 1-semialdehyde (GSA). This chain is Glutamyl-tRNA reductase, found in Clostridium beijerinckii (strain ATCC 51743 / NCIMB 8052) (Clostridium acetobutylicum).